The primary structure comprises 355 residues: MEEMDDFTVRRGEREDITGAAGPPEERPLDPAAFEEDDEPTLRPRTLDEFVGQERLKENLRIFVEAAKQRGEPLDHMLLAGPPGLGKTSLCRILAAEMGVQLHPTSGPSLERAGDMAAILTSLEEGDFLFIDEIHRLNRQIEEVLYPAMEDFAIDIVLGQGPSARTIRMDLPRFTLVGATTRTGLMTKPLLDRFGFSARLDYYEPHELEKIVVRNARILGVPITEGGARQLARRSRGTPRVANRLLKRVRDYAQVVGDGTIDEETANAALEMQGVDHLGLDRTDREYLSLIIEKFDGGPVGVGTLSVALGEARDTVEDVYEPYLLQSGLIQRTSRGRVATRHAYAHLGFPVRDGG.

The interval 1 to 43 is disordered; sequence MEEMDDFTVRRGEREDITGAAGPPEERPLDPAAFEEDDEPTLR. The large ATPase domain (RuvB-L) stretch occupies residues 4-203; it reads MDDFTVRRGE…FGFSARLDYY (200 aa). Residues 7 to 17 are compositionally biased toward basic and acidic residues; it reads FTVRRGEREDI. Residues leucine 42, arginine 43, glycine 84, lysine 87, threonine 88, serine 89, 150–152, arginine 193, tyrosine 203, and arginine 240 each bind ATP; that span reads EDF. Threonine 88 contacts Mg(2+). Residues 204-274 are small ATPAse domain (RuvB-S); the sequence is EPHELEKIVV…TANAALEMQG (71 aa). Residues 277–355 are head domain (RuvB-H); the sequence is HLGLDRTDRE…HLGFPVRDGG (79 aa). Positions 313, 332, and 337 each coordinate DNA.

Belongs to the RuvB family. Homohexamer. Forms an RuvA(8)-RuvB(12)-Holliday junction (HJ) complex. HJ DNA is sandwiched between 2 RuvA tetramers; dsDNA enters through RuvA and exits via RuvB. An RuvB hexamer assembles on each DNA strand where it exits the tetramer. Each RuvB hexamer is contacted by two RuvA subunits (via domain III) on 2 adjacent RuvB subunits; this complex drives branch migration. In the full resolvosome a probable DNA-RuvA(4)-RuvB(12)-RuvC(2) complex forms which resolves the HJ.

Its subcellular location is the cytoplasm. It carries out the reaction ATP + H2O = ADP + phosphate + H(+). Functionally, the RuvA-RuvB-RuvC complex processes Holliday junction (HJ) DNA during genetic recombination and DNA repair, while the RuvA-RuvB complex plays an important role in the rescue of blocked DNA replication forks via replication fork reversal (RFR). RuvA specifically binds to HJ cruciform DNA, conferring on it an open structure. The RuvB hexamer acts as an ATP-dependent pump, pulling dsDNA into and through the RuvAB complex. RuvB forms 2 homohexamers on either side of HJ DNA bound by 1 or 2 RuvA tetramers; 4 subunits per hexamer contact DNA at a time. Coordinated motions by a converter formed by DNA-disengaged RuvB subunits stimulates ATP hydrolysis and nucleotide exchange. Immobilization of the converter enables RuvB to convert the ATP-contained energy into a lever motion, pulling 2 nucleotides of DNA out of the RuvA tetramer per ATP hydrolyzed, thus driving DNA branch migration. The RuvB motors rotate together with the DNA substrate, which together with the progressing nucleotide cycle form the mechanistic basis for DNA recombination by continuous HJ branch migration. Branch migration allows RuvC to scan DNA until it finds its consensus sequence, where it cleaves and resolves cruciform DNA. The polypeptide is Holliday junction branch migration complex subunit RuvB (Rubrobacter xylanophilus (strain DSM 9941 / JCM 11954 / NBRC 16129 / PRD-1)).